Here is a 187-residue protein sequence, read N- to C-terminus: Small ribosomal subunit protein uS5 (187 aa).

The S5 DRBM domain maps to 20–83 (FADRLVAINR…EQAKRQMIRV (64 aa)). Residues 155–187 (KKEQSPRSVAQRRGKKVADILPKRDEAPAEAEA) form a disordered region. Positions 170 to 181 (KVADILPKRDEA) are enriched in basic and acidic residues.

It belongs to the universal ribosomal protein uS5 family. Part of the 30S ribosomal subunit. Contacts proteins S4 and S8.

In terms of biological role, with S4 and S12 plays an important role in translational accuracy. Its function is as follows. Located at the back of the 30S subunit body where it stabilizes the conformation of the head with respect to the body. This Ruegeria sp. (strain TM1040) (Silicibacter sp.) protein is Small ribosomal subunit protein uS5.